Consider the following 668-residue polypeptide: Packaging protein UL32 homolog (668 aa).

Polar residues predominate over residues 1–10; that stretch reads MNPSTHVSSN. The segment at 1 to 35 is disordered; sequence MNPSTHVSSNGPTTPPHGPHTTFLPPTSPAPSTSS. Residues 19-35 are compositionally biased toward low complexity; it reads PHTTFLPPTSPAPSTSS. Zn(2+)-binding residues include C200, C203, H276, and C282. The segment at 200-282 is zinc finger 1; the sequence is CNLCAIISIC…FHLHFFINRC (83 aa). Residues 401 to 430 are disordered; it reads IEEEEDEEGGEKGGDDPGRHNGGGTSGGFS. Positions 410-419 are enriched in basic and acidic residues; sequence GEKGGDDPGR. Zn(2+) contacts are provided by C459, C462, H567, and C574. Positions 459–574 are zinc finger 2; the sequence is CLLCELMACS…YKHFFCDPQC (116 aa).

Belongs to the herpesviridae UL32 protein family.

It is found in the host cytoplasm. The protein localises to the host nucleus. Its function is as follows. Plays a role in efficient localization of neo-synthesized capsids to nuclear replication compartments, thereby controlling cleavage and packaging of virus genomic DNA. In Homo sapiens (Human), this protein is Packaging protein UL32 homolog (UL52).